Consider the following 277-residue polypeptide: Putative thiosulfate sulfurtransferase (277 aa).

Rhodanese domains lie at 18–125 and 154–274; these read KAPK…PLSA and AIGT…APIE. An Isoglutamyl lysine isopeptide (Lys-Gln) (interchain with Q-Cter in protein Pup) cross-link involves residue Lys-67. Catalysis depends on Cys-233, which acts as the Cysteine persulfide intermediate. Arg-238 contributes to the substrate binding site.

The enzyme catalyses thiosulfate + hydrogen cyanide = thiocyanate + sulfite + 2 H(+). May be a sulfotransferase involved in the formation of thiosulfate. The protein is Putative thiosulfate sulfurtransferase of Mycolicibacterium smegmatis (strain ATCC 700084 / mc(2)155) (Mycobacterium smegmatis).